Here is a 225-residue protein sequence, read N- to C-terminus: Phosphoserine phosphatase (225 aa).

Methionine 1 carries the N-acetylmethionine modification. Residue aspartate 20 is the Nucleophile of the active site. 2 residues coordinate Mg(2+): aspartate 20 and aspartate 22. Aspartate 20 to aspartate 22 contributes to the L-serine binding site. Aspartate 22 (proton donor) is an active-site residue. An O-phospho-L-serine-binding site is contributed by methionine 52. Glycine 53 is a binding site for phosphate. Residues serine 109–glycine 111 and lysine 158 each bind L-serine. O-phospho-L-serine-binding positions include serine 109–glycine 111 and lysine 158. Aspartate 179 lines the Mg(2+) pocket. Threonine 182 is a binding site for O-phospho-L-serine. Position 182 (threonine 182) interacts with phosphate.

Belongs to the HAD-like hydrolase superfamily. SerB family. Homodimer. Mg(2+) serves as cofactor.

Its subcellular location is the cytoplasm. The protein localises to the cytosol. It catalyses the reaction O-phospho-L-serine + H2O = L-serine + phosphate. It carries out the reaction O-phospho-D-serine + H2O = D-serine + phosphate. It participates in amino-acid biosynthesis; L-serine biosynthesis; L-serine from 3-phospho-D-glycerate: step 3/3. Catalyzes the last irreversible step in the biosynthesis of L-serine from carbohydrates, the dephosphorylation of O-phospho-L-serine to L-serine. L-serine can then be used in protein synthesis, to produce other amino acids, in nucleotide metabolism or in glutathione synthesis, or can be racemized to D-serine, a neuromodulator. May also act on O-phospho-D-serine. This chain is Phosphoserine phosphatase, found in Mus musculus (Mouse).